The sequence spans 192 residues: Adenylate kinase (192 aa).

10–18 lines the ATP pocket; it reads GVPGVGSTT.

This sequence belongs to the archaeal adenylate kinase family. Monomer.

Its subcellular location is the cytoplasm. The enzyme catalyses AMP + ATP = 2 ADP. In Methanococcus voltae, this protein is Adenylate kinase (adkA).